We begin with the raw amino-acid sequence, 339 residues long: Phosphate acyltransferase (339 aa).

This sequence belongs to the PlsX family. In terms of assembly, homodimer. Probably interacts with PlsY.

The protein localises to the cytoplasm. It catalyses the reaction a fatty acyl-[ACP] + phosphate = an acyl phosphate + holo-[ACP]. It participates in lipid metabolism; phospholipid metabolism. Functionally, catalyzes the reversible formation of acyl-phosphate (acyl-PO(4)) from acyl-[acyl-carrier-protein] (acyl-ACP). This enzyme utilizes acyl-ACP as fatty acyl donor, but not acyl-CoA. The polypeptide is Phosphate acyltransferase (Clostridium perfringens (strain SM101 / Type A)).